The sequence spans 82 residues: Small ribosomal subunit protein bS18 (82 aa).

A disordered region spans residues methionine 1–glutamate 25.

This sequence belongs to the bacterial ribosomal protein bS18 family. In terms of assembly, part of the 30S ribosomal subunit. Forms a tight heterodimer with protein bS6.

In terms of biological role, binds as a heterodimer with protein bS6 to the central domain of the 16S rRNA, where it helps stabilize the platform of the 30S subunit. This is Small ribosomal subunit protein bS18 from Corynebacterium urealyticum (strain ATCC 43042 / DSM 7109).